We begin with the raw amino-acid sequence, 746 residues long: Probable ubiquitin carboxyl-terminal hydrolase MINDY-4 (746 aa).

3 disordered regions span residues 123–179 (DDET…SEGE), 198–254 (MALG…IKGE), and 319–342 (GKGA…FSNM). Composition is skewed to polar residues over residues 141 to 152 (YRSQNDLQFNKS) and 165 to 174 (TEAGVTSTGV). Cysteine 448 functions as the Nucleophile in the catalytic mechanism. The active-site Proton acceptor is histidine 666.

Belongs to the MINDY deubiquitinase family. FAM188 subfamily.

The enzyme catalyses Thiol-dependent hydrolysis of ester, thioester, amide, peptide and isopeptide bonds formed by the C-terminal Gly of ubiquitin (a 76-residue protein attached to proteins as an intracellular targeting signal).. Functionally, probable hydrolase that can remove 'Lys-48'-linked conjugated ubiquitin from proteins. This chain is Probable ubiquitin carboxyl-terminal hydrolase MINDY-4 (mindy4), found in Xenopus tropicalis (Western clawed frog).